An 875-amino-acid polypeptide reads, in one-letter code: Aminopeptidase M1-B (875 aa).

The required for membrane association stretch occupies residues 96 to 203 (IGEGVLKMDF…MSTYLVAIVV (108 aa)). Substrate contacts are provided by residues E136 and 269–273 (GAMEN). H305 is a binding site for Zn(2+). Catalysis depends on E306, which acts as the Proton acceptor. Residues H309 and E328 each coordinate Zn(2+). Positions 722 to 723 (LL) match the Dileucine internalization motif motif.

The protein belongs to the peptidase M1 family. In terms of assembly, homodimer. Zn(2+) is required as a cofactor.

Its subcellular location is the membrane. It is found in the microsome membrane. The protein localises to the cytoplasm. It catalyses the reaction Release of an N-terminal amino acid, Xaa-|-Yaa- from a peptide, amide or arylamide. Xaa is preferably Ala, but may be most amino acids including Pro (slow action). When a terminal hydrophobic residue is followed by a prolyl residue, the two may be released as an intact Xaa-Pro dipeptide.. The polypeptide is Aminopeptidase M1-B (Oryza sativa subsp. japonica (Rice)).